Consider the following 883-residue polypeptide: Sodium/sulfate cotransporter 2 (883 aa).

The next 6 membrane-spanning stretches (helical) occupy residues 3–23 (FGWQ…VMAA), 30–50 (VTFT…VTVA), 60–80 (GLLT…TGGL), 106–126 (MCLS…PILI), 139–159 (LLIP…IGTS), and 185–205 (IFDI…FILL). 4 consecutive RCK C-terminal domains span residues 211–295 (LPGN…EFGL), 317–401 (VFTP…SKNN), 406–491 (VRAV…FPGL), and 497–583 (EQVD…DKSF). 6 helical membrane passes run 600-620 (MVIG…GGLK), 624-644 (YIHL…TGCM), 657-677 (VYLT…TGVA), 693-713 (SDGA…ELLT), 774-794 (FAII…FILC), and 802-822 (VWIV…LYFL). The interval 857–883 (QASRTGSDGTGSSDSPRALGVPKVITA) is disordered. The span at 861-871 (TGSDGTGSSDS) shows a compositional bias: low complexity.

It belongs to the divalent anion:Na+ symporter (DASS) superfamily. Na+/sulfate symporter (TC 2.A.47.4) family.

Its subcellular location is the cell membrane. In terms of biological role, na(+)/sulfate cotransporter with a probable high-affinity for sulfate and a proteasome dependent turnover. The protein is Sodium/sulfate cotransporter 2 (SLT2) of Chlamydomonas reinhardtii (Chlamydomonas smithii).